A 779-amino-acid chain; its full sequence is Molybdenum cofactor sulfurase (779 aa).

At K247 the chain carries N6-(pyridoxal phosphate)lysine. The active site involves C409. Residues 624–779 (SQSLGLEGVR…LTCGDVIVVS (156 aa)) enclose the MOSC domain. S732 is subject to Phosphoserine.

This sequence belongs to the class-V pyridoxal-phosphate-dependent aminotransferase family. MOCOS subfamily. Requires pyridoxal 5'-phosphate as cofactor.

It carries out the reaction Mo-molybdopterin + L-cysteine + AH2 = thio-Mo-molybdopterin + L-alanine + A + H2O. Its pathway is cofactor biosynthesis; molybdopterin biosynthesis. In terms of biological role, sulfurates the molybdenum cofactor. Sulfation of molybdenum is essential for xanthine dehydrogenase (XDH) and aldehyde oxidase (ADO) enzymes in which molybdenum cofactor is liganded by 1 oxygen and 1 sulfur atom in active form. The chain is Molybdenum cofactor sulfurase from Drosophila mojavensis (Fruit fly).